The following is a 185-amino-acid chain: Ribosome-recycling factor (185 aa).

This sequence belongs to the RRF family.

It localises to the cytoplasm. Responsible for the release of ribosomes from messenger RNA at the termination of protein biosynthesis. May increase the efficiency of translation by recycling ribosomes from one round of translation to another. The protein is Ribosome-recycling factor of Desulfatibacillum aliphaticivorans.